A 673-amino-acid chain; its full sequence is Bifunctional polymyxin resistance protein ArnA (673 aa).

The tract at residues 1–311 is formyltransferase ArnAFT; sequence MKAIVFAYHD…EMGMVPQARL (311 aa). His104 functions as the Proton donor; for formyltransferase activity in the catalytic mechanism. (6R)-10-formyltetrahydrofolate contacts are provided by residues Arg114 and 136 to 140; that span reads VSRAD. Positions 321–673 are dehydrogenase ArnADH; that stretch reads RRTRVLILGV…HTADATDTQG (353 aa). NAD(+) is bound by residues Asp354 and 375 to 376; that span reads DI. UDP-alpha-D-glucuronate-binding positions include Ala400, Tyr405, and 439–440; that span reads TS. The Proton acceptor; for decarboxylase activity role is filled by Glu441. UDP-alpha-D-glucuronate contacts are provided by residues Arg467, Asn499, 533 to 542, and Tyr620; that span reads KLVDGGAQKR. Residue Arg626 is the Proton donor; for decarboxylase activity of the active site.

This sequence in the N-terminal section; belongs to the Fmt family. UDP-L-Ara4N formyltransferase subfamily. The protein in the C-terminal section; belongs to the NAD(P)-dependent epimerase/dehydratase family. UDP-glucuronic acid decarboxylase subfamily. As to quaternary structure, homohexamer, formed by a dimer of trimers.

The enzyme catalyses UDP-alpha-D-glucuronate + NAD(+) = UDP-beta-L-threo-pentopyranos-4-ulose + CO2 + NADH. It catalyses the reaction UDP-4-amino-4-deoxy-beta-L-arabinose + (6R)-10-formyltetrahydrofolate = UDP-4-deoxy-4-formamido-beta-L-arabinose + (6S)-5,6,7,8-tetrahydrofolate + H(+). The protein operates within nucleotide-sugar biosynthesis; UDP-4-deoxy-4-formamido-beta-L-arabinose biosynthesis; UDP-4-deoxy-4-formamido-beta-L-arabinose from UDP-alpha-D-glucuronate: step 1/3. Its pathway is nucleotide-sugar biosynthesis; UDP-4-deoxy-4-formamido-beta-L-arabinose biosynthesis; UDP-4-deoxy-4-formamido-beta-L-arabinose from UDP-alpha-D-glucuronate: step 3/3. It participates in bacterial outer membrane biogenesis; lipopolysaccharide biosynthesis. In terms of biological role, bifunctional enzyme that catalyzes the oxidative decarboxylation of UDP-glucuronic acid (UDP-GlcUA) to UDP-4-keto-arabinose (UDP-Ara4O) and the addition of a formyl group to UDP-4-amino-4-deoxy-L-arabinose (UDP-L-Ara4N) to form UDP-L-4-formamido-arabinose (UDP-L-Ara4FN). The modified arabinose is attached to lipid A and is required for resistance to polymyxin and cationic antimicrobial peptides. This is Bifunctional polymyxin resistance protein ArnA from Pectobacterium atrosepticum (strain SCRI 1043 / ATCC BAA-672) (Erwinia carotovora subsp. atroseptica).